The primary structure comprises 146 residues: Hemoglobin subunit beta (146 aa).

Valine 1 is modified (N-acetylvaline). The Globin domain occupies 2–146 (NLTAAEKTQV…VANALAHKYH (145 aa)). Threonine 12 carries the phosphothreonine modification. Lysine 59 carries the post-translational modification N6-acetyllysine. Histidine 63 lines the heme b pocket. Lysine 82 is modified (N6-acetyllysine). Position 92 (histidine 92) interacts with heme b. Cysteine 93 is subject to S-nitrosocysteine. N6-acetyllysine is present on lysine 144.

This sequence belongs to the globin family. In terms of assembly, heterotetramer of two alpha chains and two beta chains. In terms of tissue distribution, red blood cells.

In terms of biological role, involved in oxygen transport from the lung to the various peripheral tissues. This is Hemoglobin subunit beta (HBB) from Loxodonta africana (African elephant).